Reading from the N-terminus, the 335-residue chain is Galactinol synthase 2 (335 aa).

Lys-103 is a catalytic residue. Residues Asp-119, Asp-121, and His-257 each coordinate Mn(2+).

The protein belongs to the glycosyltransferase 8 family. Galactosyltransferase subfamily. Requires a divalent metal cation as cofactor. As to expression, accumulates in mature seeds.

The protein localises to the cytoplasm. It catalyses the reaction myo-inositol + UDP-alpha-D-galactose = alpha-D-galactosyl-(1-&gt;3)-1D-myo-inositol + UDP + H(+). In terms of biological role, galactinol synthase involved in the biosynthesis of raffinose family oligosaccharides (RFOs) that function as osmoprotectants. Promotes stress tolerance of factors such as drought, chilling, salinity and methylviologen (MV), a superoxide radical generating drug, by mediating an increase in levels of the endogenous osmoprotective compounds, galactinol and raffinose. This chain is Galactinol synthase 2 (GOLS2), found in Arabidopsis thaliana (Mouse-ear cress).